The chain runs to 415 residues: MNDLLPEQSPAWQQVEAVIRRVAASYGYSEIRMPVLESTQLFKRSIGEVTDIVEKEMYTFDDRNGESVTLRPEGTASCVRAGNQHGLLYNQIQRLWYMGPMFRYERPQKGRYRQFHQFGIETFGLESADADAEVILLSARLWREFGLADQVELQLNSLGSNEARANYRDALKAYLSDYESELDDDSKRRLESNPLRILDSKDEKTQKILEGAPSLSEYWDAESKEHFEQLTARLEAAGISYTLNERLVRGLDYYNRTVFEWVTTALGAQGTVCAGGRYDGLVEQLGGKATPAVGFAMGMERLVLLLQEQGKLTPRRVVDAYLMPLGEEAELNAPRIAEQLRNELPELRLVSHCGGGSMKKQMKKADKSGAQVALIIGADEIAQQLVTVKPLRTAEEQQTLGWQALIEFLQPLTRG.

Belongs to the class-II aminoacyl-tRNA synthetase family. Homodimer.

It is found in the cytoplasm. It carries out the reaction tRNA(His) + L-histidine + ATP = L-histidyl-tRNA(His) + AMP + diphosphate + H(+). In Idiomarina loihiensis (strain ATCC BAA-735 / DSM 15497 / L2-TR), this protein is Histidine--tRNA ligase.